Consider the following 143-residue polypeptide: Large ribosomal subunit protein uL13 (143 aa).

It belongs to the universal ribosomal protein uL13 family. In terms of assembly, part of the 50S ribosomal subunit.

This protein is one of the early assembly proteins of the 50S ribosomal subunit, although it is not seen to bind rRNA by itself. It is important during the early stages of 50S assembly. The protein is Large ribosomal subunit protein uL13 of Neisseria gonorrhoeae (strain ATCC 700825 / FA 1090).